The following is a 2060-amino-acid chain: MFPGDMESKASSMNGDQPSSPTPSSSTSVTIPTYTPTSMYDQELQFSRSVAKHVYEAAATLRAAFLCGFQPYTDVASFAHDEIVSQLHYWSSFISFVNDPANNQAFTRMDILEVTRALVQCAEDTVLAGNDIHMIVAHLQIPQSEKGRIIKTFVTANSMLGDQPEVEVSNLVRSSLDGESTVYVIFGGQGNGDGYFAELAELYEVYQPLVGDLVRSASDLFRHLTDKMDVNDCFSEGMELMAWIDKDNDTPIPSRPYLLSSAISFPLITLLQLLHFKISFHYSGCSFKDVQRFLAGVTGHSQGIIAAAAIAAVDSPASFHELSLQAMTVSFSMGVRIHQYYGPQVLPQLITEACLAEGKPIPTPMLSVRGLSIETLATTIQDLNKSLPRTKVQLEVGLRNNDSNYVITGDPMSLRGLCTHFDHKKKALDIVYQFLPAAAPYHNSYLSIAASRAIEDCQEIILRGCDLKMPVFSTVDGSDLRNNEGANLVPDLIRMVCCQVVNWPAALNMPGATHILDFGPGGAQGVGVLANSMKAGQGVRVIHATVLNGLNTELGYKPDLFDRSRKASERVSKPQPWVNSFQPTLTRFTENKLVVSTRFTRLFLQPPIMVAAMTPTTTSWDFVAAVMKAGFHAELACGGFHDRDSLSAAITAIANQVEPGTGITCNVIYSSPTSLRWQIDELEKLVAAGYQIDGLSIGAGVPSVEVVQGYVERLQLQHIALKPGSTEAIERTLKIAKALQPLPVVLQWTGGRGGGHHSNQDFHAPLISMYGKIRAQDNVVLVVGSGFGGPSDTLPYITGKWASDMGLPPMPVDGILLGSRVMVAKEAHTSTEAKHLIVATEGAPDDEWSGTYSRPTGGVLSVISEMRQPIHKIATRAVRLWHELDQTIFHLGPKERVAEITRRRDEIIRRLNHDYHRVWFGCSGPTRDPVELDEMTYSEVLHRFVELAYVTAEHRWVHLSWKKLFSELLTRTMSRLHRTSDSRSETLVDDLDDPYSTLATLTDASAQLITYEDSIYFLQLFRRRGQKPVPFIPVLDADFETWFKKDSLWQSEDIAAVPNHDAQRVCILHGPVAAQYSTKVDEPVGEILGNIHTAWVTAILQTHYQGQSELVPVFDNSPFHASQVESSKTNTELSTPPLNHGLWTLEQWIVHIVQSRDKNLNWAKALLASPRVLCGRRLVPNPFITTLSGLRSMDIHVAETTKTGVGAGFTFFKIPLEETHQDLLDLTLQSNNEISIQISHYPTLQSAPITLTHHMSCQFSKLAMNKSLSDRSAMIRDFYRRIWLGTSHESSHKSIYDKFECEPYTVTADAIRKYNDCTRLPTSMPPTSWATSEVPLDFAVVIAWKALVKPLFSRELEADILKLLHVSNEITLHSDHSPPMVHDVLHTESQVTEVVLQPSGKMVQVEAHVFRGKSCILDLKTRFLLVGNDTHRDHLFRRSILPPSEILLEDEISAMQLVQSSWFQPLRDTSDLVGKRVVFQLEDLMQFHENGQIRCHQITGCAMLDGSIVGNCYLETPDDAYLSLMGNILSQQTGSSSQPAIFETPLLLFEEQEISFTAPTCEQTIAYSAASGDSNPIHVSPVFASLAGLSSPIVHGMHISAEVLQIVYTWLCASSMSRLKKSHVLFAGKVCTGDRLAVSMKHTAMHRGLRVVEVQIHKNMAEELVFVGTYEIEQPLTALVFTGQGSQKKGMGMDLRDKSAAARRIWDTADDHFQHEYGFRITDIVRHDPPSLTVHFGGVHGRRVRSNYMALTYERVASDGQIIEAKLFPTINENTTKYVFSSESGLLSSTQFTQPALGLMELAIMADLEARQLIPSNVTFAGHSLGEYSALMAVGHIMPLEVFISTVFYRGLVMQSTVTYDHHGRSKYAMCAVDPTRVSTDFDGQKLGWLVTQIASEGQWLLEVVNHNVIDSQYVCAGEAIALHCLGVVLDRIHYASKSFFDDGSFDLTDCIRESVKEIRKDRSKVVLSRSKASIPLKGLDVPFHSSHLRSGVDPFRRRLQRSIKLDNASPTKLIGRYIPNLTGKPFEVTRQYFNEVLRLTGSIPIQQALESWDRVASTI.

The tract at residues 1 to 32 (MFPGDMESKASSMNGDQPSSPTPSSSTSVTIP) is disordered. A compositionally biased stretch (low complexity) spans 18 to 32 (PSSPTPSSSTSVTIP). Residues 182 to 543 (VYVIFGGQGN…KAGQGVRVIH (362 aa)) are acetyltransferase (AT) domain. Residue Ser301 is the For acetyltransferase activity of the active site. An enoyl reductase (ER) domain region spans residues 600-845 (TRLFLQPPIM…LIVATEGAPD (246 aa)). Residues 1157 to 1640 (DKNLNWAKAL…CTGDRLAVSM (484 aa)) are dehydratase (DH) domain. In terms of domain architecture, MaoC-like spans 1549 to 1661 (FEEQEISFTA…VEVQIHKNMA (113 aa)). Positions 1679 to 2043 (LVFTGQGSQK…FNEVLRLTGS (365 aa)) are malonyl/palmitoyl transferase (MT/PT) domain. The active-site For malonyltransferase activity is Ser1824.

This sequence belongs to the fungal fatty acid synthetase subunit beta family. [Alpha(6)beta(6)] hexamers of two multifunctional subunits (alpha and beta).

It catalyses the reaction acetyl-CoA + n malonyl-CoA + 2n NADPH + 4n H(+) = a long-chain-acyl-CoA + n CoA + n CO2 + 2n NADP(+).. The catalysed reaction is holo-[ACP] + acetyl-CoA = acetyl-[ACP] + CoA. The enzyme catalyses holo-[ACP] + malonyl-CoA = malonyl-[ACP] + CoA. It carries out the reaction a (3R)-hydroxyacyl-[ACP] = a (2E)-enoyl-[ACP] + H2O. It catalyses the reaction a 2,3-saturated acyl-[ACP] + NAD(+) = a (2E)-enoyl-[ACP] + NADH + H(+). The catalysed reaction is (9Z)-octadecenoyl-[ACP] + H2O = (9Z)-octadecenoate + holo-[ACP] + H(+). It participates in mycotoxin biosynthesis. Functionally, fatty acid synthase subunit beta; part of the gene cluster that mediates the biosynthesis of gramillins A and B, bicyclic lipopeptides that induce cell death in maize leaves but not in wheat leaves. The nonribosomal peptide synthetase GRA1 incorporates respectively a glutamic adic (Glu), a leucine (Leu), a serine (Ser), a hydroxyglutamine (HOGln), a 2-amino decanoic acid, and 2 cysteins (CysB and CysA). The biosynthesis of 2-amino decanoic acid incorporated in gramillins could be initiated by a fatty acid synthase composed of the alpha and beta subunits FGSG_00036 and FGSG_11656. The cytochrome P450 monooxygenase FGSG_15680 could hydroxylate the fatty acid chain. Subsequent oxidation to the ketone by the oxidoreductase FGSG_00048 and transamination by aminotransferase FGSG_00049 could form 2-amino-decanoic acid. On the other hand, FGSG_15680 could also be responsible for the HO-modified glutamine at the gamma-position. Whether hydroxylation occurs on the fully assembled product or on the Gln residue prior to assembly into the gramillins requires further proof. The thioredoxin FGSG_00043 could also be required for the disulfide-bond formation between CysA and CysB. The specific involvement of the remaining proteins from the cluster is more difficult to discern, but could have broader regulatory (FGSG_00040 and FGSG_11657) or enzymatic functions (FGSG_00044 and FGSG_00045). The final C-domain of GRA1 does not possess the expected sequence of a termination CT domain, often implicated in macrocyclization and release of a cyclopeptidein fungal NRPs; and the thioesterase FGSG_00047 may act in concert with the terminal C-domain of GRA1 to catalyze the formation of the macrocyclic anhydride and release of the products. This Gibberella zeae (strain ATCC MYA-4620 / CBS 123657 / FGSC 9075 / NRRL 31084 / PH-1) (Wheat head blight fungus) protein is Fatty acid synthase subunit beta.